Here is a 113-residue protein sequence, read N- to C-terminus: UPF0482 protein KPK_2871 (113 aa).

The signal sequence occupies residues 1–28 (MNMTLNKRWCLTAILALSAVVYTSSSFA). The segment at 38–61 (GDSAQSRQQASMEKEQWNDTRSLR) is disordered. Polar residues predominate over residues 39–48 (DSAQSRQQAS). A compositionally biased stretch (basic and acidic residues) spans 49 to 59 (MEKEQWNDTRS).

This sequence belongs to the UPF0482 family.

The polypeptide is UPF0482 protein KPK_2871 (Klebsiella pneumoniae (strain 342)).